A 319-amino-acid chain; its full sequence is NADH-quinone oxidoreductase subunit H 2 (319 aa).

9 helical membrane passes run 1 to 21 (MIGM…LLVL), 77 to 97 (ILAP…VAIG), 107 to 127 (VGLL…VLGA), 147 to 167 (LAYE…AGSF), 179 to 199 (VWFV…GIAA), 214 to 234 (LIAG…FLGE), 238 to 258 (VLLV…GPWL), 262 to 282 (VWFG…RATL), and 293 to 313 (FAWK…GIVV).

The protein belongs to the complex I subunit 1 family. As to quaternary structure, NDH-1 is composed of 14 different subunits. Subunits NuoA, H, J, K, L, M, N constitute the membrane sector of the complex.

Its subcellular location is the cell inner membrane. The catalysed reaction is a quinone + NADH + 5 H(+)(in) = a quinol + NAD(+) + 4 H(+)(out). In terms of biological role, NDH-1 shuttles electrons from NADH, via FMN and iron-sulfur (Fe-S) centers, to quinones in the respiratory chain. The immediate electron acceptor for the enzyme in this species is believed to be ubiquinone. Couples the redox reaction to proton translocation (for every two electrons transferred, four hydrogen ions are translocated across the cytoplasmic membrane), and thus conserves the redox energy in a proton gradient. This subunit may bind ubiquinone. The chain is NADH-quinone oxidoreductase subunit H 2 from Rhodopseudomonas palustris (strain ATCC BAA-98 / CGA009).